Reading from the N-terminus, the 274-residue chain is 2-dehydro-3-deoxyphosphooctonate aldolase (274 aa).

The protein belongs to the KdsA family.

It is found in the cytoplasm. It carries out the reaction D-arabinose 5-phosphate + phosphoenolpyruvate + H2O = 3-deoxy-alpha-D-manno-2-octulosonate-8-phosphate + phosphate. Its pathway is carbohydrate biosynthesis; 3-deoxy-D-manno-octulosonate biosynthesis; 3-deoxy-D-manno-octulosonate from D-ribulose 5-phosphate: step 2/3. It participates in bacterial outer membrane biogenesis; lipopolysaccharide biosynthesis. This chain is 2-dehydro-3-deoxyphosphooctonate aldolase, found in Rickettsia conorii (strain ATCC VR-613 / Malish 7).